The chain runs to 166 residues: Small ribosomal subunit protein uS5 (166 aa).

The 64-residue stretch at 12–75 (YIEKLVQVNR…EAARRNMIQV (64 aa)) folds into the S5 DRBM domain.

It belongs to the universal ribosomal protein uS5 family. Part of the 30S ribosomal subunit. Contacts proteins S4 and S8.

In terms of biological role, with S4 and S12 plays an important role in translational accuracy. Its function is as follows. Located at the back of the 30S subunit body where it stabilizes the conformation of the head with respect to the body. In Pseudomonas fluorescens (strain Pf0-1), this protein is Small ribosomal subunit protein uS5.